The chain runs to 318 residues: O-glucosyltransferase LpsA (318 aa).

Belongs to the glycosyltransferase 90 family.

The protein operates within protein modification; protein glycosylation. Functionally, involved in lipopolysaccharide core biosynthesis. The polypeptide is O-glucosyltransferase LpsA (lpsA) (Dichelobacter nodosus (Bacteroides nodosus)).